The following is a 125-amino-acid chain: C-X-C motif chemokine 9 (125 aa).

An N-terminal signal peptide occupies residues 1–21 (MKKSAPLFLGIIFLTLTGVQG). Cystine bridges form between cysteine 30–cysteine 57 and cysteine 32–cysteine 73. A disordered region spans residues 91–125 (QVNQKKKQRKGKKYKKTKKVPKVKRSQRPSQKKTT). The span at 93–125 (NQKKKQRKGKKYKKTKKVPKVKRSQRPSQKKTT) shows a compositional bias: basic residues.

This sequence belongs to the intercrine alpha (chemokine CxC) family.

It is found in the secreted. In terms of biological role, cytokine that affects the growth, movement, or activation state of cells that participate in immune and inflammatory response. Chemotactic for activated T-cells. Binds to CXCR3. This chain is C-X-C motif chemokine 9 (CXCL9), found in Bos taurus (Bovine).